We begin with the raw amino-acid sequence, 139 residues long: MAMTYHLDVVSAEQQMFSGLVEKIQVTGSEGELGIFPGHAPLLTAIKPGMIRIVKQFGHEEFIYLSGGILEVQPGSVTVLADTAIRGQDLDEARALEAKRKAEEHIKSSHGDVDYAQASAELAKAIAKLRVIELTKKAM.

The protein belongs to the ATPase epsilon chain family. F-type ATPases have 2 components, CF(1) - the catalytic core - and CF(0) - the membrane proton channel. CF(1) has five subunits: alpha(3), beta(3), gamma(1), delta(1), epsilon(1). CF(0) has three main subunits: a, b and c.

The protein localises to the cell inner membrane. In terms of biological role, produces ATP from ADP in the presence of a proton gradient across the membrane. This is ATP synthase epsilon chain from Enterobacter sp. (strain 638).